Reading from the N-terminus, the 284-residue chain is Tropomyosin (284 aa).

Residues methionine 1–tyrosine 284 adopt a coiled-coil conformation. Positions asparagine 202–glutamate 213 are enriched in polar residues. The segment at asparagine 202–glutamate 223 is disordered. The segment covering alanine 214–glutamate 223 has biased composition (basic and acidic residues).

The protein belongs to the tropomyosin family. In terms of assembly, homodimer.

Its function is as follows. Tropomyosin, in association with the troponin complex, plays a central role in the calcium dependent regulation of muscle contraction. The protein is Tropomyosin of Haliotis rufescens (California red abalone).